The sequence spans 396 residues: Tryptophan synthase beta chain (396 aa).

Lys88 is modified (N6-(pyridoxal phosphate)lysine).

It belongs to the TrpB family. Tetramer of two alpha and two beta chains. The cofactor is pyridoxal 5'-phosphate.

The enzyme catalyses (1S,2R)-1-C-(indol-3-yl)glycerol 3-phosphate + L-serine = D-glyceraldehyde 3-phosphate + L-tryptophan + H2O. The protein operates within amino-acid biosynthesis; L-tryptophan biosynthesis; L-tryptophan from chorismate: step 5/5. Its function is as follows. The beta subunit is responsible for the synthesis of L-tryptophan from indole and L-serine. The sequence is that of Tryptophan synthase beta chain from Actinobacillus pleuropneumoniae serotype 5b (strain L20).